Reading from the N-terminus, the 427-residue chain is Enolase (427 aa).

Residue Gln-163 coordinates (2R)-2-phosphoglycerate. Glu-205 functions as the Proton donor in the catalytic mechanism. Asp-242, Glu-285, and Asp-312 together coordinate Mg(2+). Positions 337, 366, 367, and 388 each coordinate (2R)-2-phosphoglycerate. Catalysis depends on Lys-337, which acts as the Proton acceptor.

It belongs to the enolase family. Mg(2+) is required as a cofactor.

The protein resides in the cytoplasm. Its subcellular location is the secreted. It is found in the cell surface. The catalysed reaction is (2R)-2-phosphoglycerate = phosphoenolpyruvate + H2O. It functions in the pathway carbohydrate degradation; glycolysis; pyruvate from D-glyceraldehyde 3-phosphate: step 4/5. Catalyzes the reversible conversion of 2-phosphoglycerate (2-PG) into phosphoenolpyruvate (PEP). It is essential for the degradation of carbohydrates via glycolysis. In Bradyrhizobium sp. (strain BTAi1 / ATCC BAA-1182), this protein is Enolase.